A 731-amino-acid chain; its full sequence is Catalase-peroxidase (731 aa).

Residues 1–24 (MSTEPNCPFSGNARKHTAAGAPSN) are disordered. Positions 96 to 219 (WHSAGTYRVS…LGAVQMGLIY (124 aa)) form a cross-link, tryptophyl-tyrosyl-methioninium (Trp-Tyr) (with M-245). H97 acts as the Proton acceptor in catalysis. Positions 219–245 (YVNPEGPNGNPDPIAAARDIRETFARM) form a cross-link, tryptophyl-tyrosyl-methioninium (Tyr-Met) (with W-96). Heme b is bound at residue H260. The disordered stretch occupies residues 339–365 (GAQQWKPKGDAGAGTVPDAHDPSKRHA).

Belongs to the peroxidase family. Peroxidase/catalase subfamily. In terms of assembly, homodimer or homotetramer. Requires heme b as cofactor. Formation of the three residue Trp-Tyr-Met cross-link is important for the catalase, but not the peroxidase activity of the enzyme.

It catalyses the reaction H2O2 + AH2 = A + 2 H2O. The enzyme catalyses 2 H2O2 = O2 + 2 H2O. In terms of biological role, bifunctional enzyme with both catalase and broad-spectrum peroxidase activity. This is Catalase-peroxidase from Polaromonas sp. (strain JS666 / ATCC BAA-500).